A 120-amino-acid chain; its full sequence is Large ribosomal subunit protein uL14 (120 aa).

This sequence belongs to the universal ribosomal protein uL14 family. Part of the 50S ribosomal subunit. Forms a cluster with proteins L3 and L19. In the 70S ribosome, L14 and L19 interact and together make contacts with the 16S rRNA in bridges B5 and B8.

Functionally, binds to 23S rRNA. Forms part of two intersubunit bridges in the 70S ribosome. This chain is Large ribosomal subunit protein uL14, found in Aster yellows witches'-broom phytoplasma (strain AYWB).